Here is a 340-residue protein sequence, read N- to C-terminus: S-adenosylmethionine:tRNA ribosyltransferase-isomerase (340 aa).

The protein belongs to the QueA family. As to quaternary structure, monomer.

The protein localises to the cytoplasm. It catalyses the reaction 7-aminomethyl-7-carbaguanosine(34) in tRNA + S-adenosyl-L-methionine = epoxyqueuosine(34) in tRNA + adenine + L-methionine + 2 H(+). Its pathway is tRNA modification; tRNA-queuosine biosynthesis. Transfers and isomerizes the ribose moiety from AdoMet to the 7-aminomethyl group of 7-deazaguanine (preQ1-tRNA) to give epoxyqueuosine (oQ-tRNA). The polypeptide is S-adenosylmethionine:tRNA ribosyltransferase-isomerase (Campylobacter concisus (strain 13826)).